A 138-amino-acid polypeptide reads, in one-letter code: 6,7-dimethyl-8-ribityllumazine synthase (138 aa).

5-amino-6-(D-ribitylamino)uracil is bound by residues F13, 45–47 (VFD), and 69–71 (AVI). 74-75 (AT) is a (2S)-2-hydroxy-3-oxobutyl phosphate binding site. H77 functions as the Proton donor in the catalytic mechanism. A 5-amino-6-(D-ribitylamino)uracil-binding site is contributed by L102. A (2S)-2-hydroxy-3-oxobutyl phosphate-binding site is contributed by R117.

The protein belongs to the DMRL synthase family.

The catalysed reaction is (2S)-2-hydroxy-3-oxobutyl phosphate + 5-amino-6-(D-ribitylamino)uracil = 6,7-dimethyl-8-(1-D-ribityl)lumazine + phosphate + 2 H2O + H(+). Its pathway is cofactor biosynthesis; riboflavin biosynthesis; riboflavin from 2-hydroxy-3-oxobutyl phosphate and 5-amino-6-(D-ribitylamino)uracil: step 1/2. Catalyzes the formation of 6,7-dimethyl-8-ribityllumazine by condensation of 5-amino-6-(D-ribitylamino)uracil with 3,4-dihydroxy-2-butanone 4-phosphate. This is the penultimate step in the biosynthesis of riboflavin. The chain is 6,7-dimethyl-8-ribityllumazine synthase from Methanobrevibacter smithii (strain ATCC 35061 / DSM 861 / OCM 144 / PS).